We begin with the raw amino-acid sequence, 189 residues long: Auxin-responsive protein IAA6 (189 aa).

The EAR-like (transcriptional repression) motif lies at 13–17 (LRLGL). The PB1 domain occupies 93–178 (IGYVKVSMDG…SCKRLRIVKR (86 aa)).

This sequence belongs to the Aux/IAA family. As to quaternary structure, homodimers and heterodimers. Interacts with TPL. In terms of tissue distribution, highly expressed in stems and flowers.

The protein resides in the nucleus. Aux/IAA proteins are short-lived transcriptional factors that function as repressors of early auxin response genes at low auxin concentrations. Repression is thought to result from the interaction with auxin response factors (ARFs), proteins that bind to the auxin-responsive promoter element (AuxRE). Formation of heterodimers with ARF proteins may alter their ability to modulate early auxin response genes expression. This chain is Auxin-responsive protein IAA6 (IAA6), found in Arabidopsis thaliana (Mouse-ear cress).